We begin with the raw amino-acid sequence, 98 residues long: Large ribosomal subunit protein bL27 (98 aa).

The propeptide occupies 1-13 (MKKIWFHLDLQFF).

It belongs to the bacterial ribosomal protein bL27 family. In terms of processing, the N-terminus is cleaved by ribosomal processing cysteine protease Prp.

The chain is Large ribosomal subunit protein bL27 from Mycoplasmoides gallisepticum (strain R(low / passage 15 / clone 2)) (Mycoplasma gallisepticum).